The sequence spans 525 residues: DNA polymerase epsilon subunit 2 (525 aa).

This sequence belongs to the DNA polymerase epsilon subunit B family. Component of the epsilon DNA polymerase complex consisting of four subunits: the catalytic subunit PolE1/DNApol-epsilon255 and the accessory subunits PolE2/DNApol-epsilon58, Chrac-14/DNApolE3 and PolE4.

It localises to the nucleus. Functionally, accessory component of the DNA polymerase epsilon complex. Participates in DNA repair and in chromosomal DNA replication. Has a role in the entrance and progression through S phase. Has a role in endoreplication. Essential for viability and tissue development. The chain is DNA polymerase epsilon subunit 2 from Drosophila melanogaster (Fruit fly).